The primary structure comprises 333 residues: Adenosine deaminase (333 aa).

The Zn(2+) site is built by His12 and His14. Residues His14, Asp16, and Gly170 each contribute to the substrate site. A Zn(2+)-binding site is contributed by His197. Glu200 functions as the Proton donor in the catalytic mechanism. Asp278 serves as a coordination point for Zn(2+). Asp279 is a binding site for substrate.

This sequence belongs to the metallo-dependent hydrolases superfamily. Adenosine and AMP deaminases family. Adenosine deaminase subfamily. Requires Zn(2+) as cofactor.

The enzyme catalyses adenosine + H2O + H(+) = inosine + NH4(+). It carries out the reaction 2'-deoxyadenosine + H2O + H(+) = 2'-deoxyinosine + NH4(+). Its function is as follows. Catalyzes the hydrolytic deamination of adenosine and 2-deoxyadenosine. The sequence is that of Adenosine deaminase from Shigella sonnei (strain Ss046).